A 516-amino-acid chain; its full sequence is Maturase K (516 aa).

This sequence belongs to the intron maturase 2 family. MatK subfamily.

It is found in the plastid. The protein resides in the chloroplast. Usually encoded in the trnK tRNA gene intron. Probably assists in splicing its own and other chloroplast group II introns. This is Maturase K from Galanthus nivalis (Common snowdrop).